Reading from the N-terminus, the 181-residue chain is Oligoribonuclease (181 aa).

The 164-residue stretch at 8 to 171 (LIWLDLEMTG…DDIKESIAEL (164 aa)) folds into the Exonuclease domain. Tyr-129 is an active-site residue.

It belongs to the oligoribonuclease family.

The protein resides in the cytoplasm. In terms of biological role, 3'-to-5' exoribonuclease specific for small oligoribonucleotides. This Colwellia psychrerythraea (strain 34H / ATCC BAA-681) (Vibrio psychroerythus) protein is Oligoribonuclease.